Consider the following 579-residue polypeptide: UPF0329 protein ECU06_1620 (579 aa).

Disordered stretches follow at residues 325–360 (EEKA…GEEA) and 370–389 (ARRK…KIHK). A compositionally biased stretch (basic residues) spans 329-338 (KGRKDGKKKS). A compositionally biased stretch (acidic residues) spans 345–360 (KEEESETEEVEAGEEA).

This sequence belongs to the UPF0329 family.

The protein is UPF0329 protein ECU06_1620 of Encephalitozoon cuniculi (strain GB-M1) (Microsporidian parasite).